Consider the following 62-residue polypeptide: Small ribosomal subunit protein bS21 (62 aa).

A compositionally biased stretch (basic and acidic residues) spans 40–52 (KPSVKRKLKSEAA). The segment at 40–62 (KPSVKRKLKSEAARKRKNKRRRY) is disordered. The span at 53-62 (RKRKNKRRRY) shows a compositional bias: basic residues.

Belongs to the bacterial ribosomal protein bS21 family.

The sequence is that of Small ribosomal subunit protein bS21 from Limosilactobacillus fermentum (strain NBRC 3956 / LMG 18251) (Lactobacillus fermentum).